Consider the following 700-residue polypeptide: AP-2 complex subunit beta (700 aa).

Residues 625–700 are disordered; sequence VGNSFPPTGA…RKLSMKRPFS (76 aa). A Phosphoserine modification is found at Ser-649. Thr-652 carries the post-translational modification Phosphothreonine. The span at 653–663 shows a compositional bias: basic and acidic residues; the sequence is AMMDDYDKPAE. Ser-683 bears the Phosphoserine mark.

Belongs to the adaptor complexes large subunit family. Adaptor protein complex 2 (AP-2) is a heterotetramer composed of two large adaptins (alpha-type subunit APL3 and beta-type subunit APL1), a medium chain (mu-type subunit APM4) and a small adaptin (sigma-type subunit APS2). Interacts with APS2.

Its subcellular location is the cell membrane. It is found in the membrane. The protein localises to the coated pit. Adaptins are components of the adaptor complexes which link clathrin to receptors in coated vesicles. Clathrin-associated protein complexes are believed to interact with the cytoplasmic tails of membrane proteins, leading to their selection and concentration. Beta adaptin is a subunit of the plasma membrane adaptor. The protein is AP-2 complex subunit beta (APL1) of Saccharomyces cerevisiae (strain ATCC 204508 / S288c) (Baker's yeast).